The following is a 390-amino-acid chain: Protein arginine N-methyltransferase 1.1 (390 aa).

The span at 1–10 (MTKNSNHDEN) shows a compositional bias: basic and acidic residues. The interval 1–59 (MTKNSNHDENEFISFEPNQNTKIRFEDADEDEVAEGSGVAGEETPQDESMFDAGESADT) is disordered. The region spanning 69 to 390 (ADYYFDSYSH…ISRTQHYKMR (322 aa)) is the SAM-dependent MTase PRMT-type domain. Active-site residues include E181 and E190.

It belongs to the class I-like SAM-binding methyltransferase superfamily. Protein arginine N-methyltransferase family. As to quaternary structure, interacts with PRMT12, MBD7 and FIB2.

It is found in the nucleus. Its subcellular location is the cytoplasm. The enzyme catalyses L-arginyl-[protein] + 2 S-adenosyl-L-methionine = N(omega),N(omega)-dimethyl-L-arginyl-[protein] + 2 S-adenosyl-L-homocysteine + 2 H(+). In terms of biological role, methylates (mono and asymmetric dimethylation) the guanidino nitrogens of arginyl residues present in a glycine and arginine-rich domain. Type I arginine methyltransferase active on both histones and non-histone proteins. Required for leaves and flowers development. Mediates the methylation of MBD7 and MED36A. The protein is Protein arginine N-methyltransferase 1.1 (PRMT11) of Arabidopsis thaliana (Mouse-ear cress).